The primary structure comprises 178 residues: NADH-quinone oxidoreductase subunit I (178 aa).

4Fe-4S ferredoxin-type domains lie at 45-74 and 90-119; these read RHPD…VEAA and KVYE…LGNE. [4Fe-4S] cluster contacts are provided by Cys54, Cys57, Cys60, Cys64, Cys99, Cys102, Cys105, and Cys109.

The protein belongs to the complex I 23 kDa subunit family. In terms of assembly, NDH-1 is composed of 15 different subunits. Subunits NuoA, H, J, K, L, M, N constitute the membrane sector of the complex. Requires [4Fe-4S] cluster as cofactor.

It is found in the cell membrane. The catalysed reaction is a quinone + NADH + 5 H(+)(in) = a quinol + NAD(+) + 4 H(+)(out). NDH-1 shuttles electrons from NADH, via FMN and iron-sulfur (Fe-S) centers, to quinones in the respiratory chain. The immediate electron acceptor for the enzyme in this species is believed to be ubiquinone. Couples the redox reaction to proton translocation (for every two electrons transferred, four hydrogen ions are translocated across the cytoplasmic membrane), and thus conserves the redox energy in a proton gradient. The sequence is that of NADH-quinone oxidoreductase subunit I from Deinococcus radiodurans (strain ATCC 13939 / DSM 20539 / JCM 16871 / CCUG 27074 / LMG 4051 / NBRC 15346 / NCIMB 9279 / VKM B-1422 / R1).